Here is a 454-residue protein sequence, read N- to C-terminus: tRNA modification GTPase MnmE (454 aa).

3 residues coordinate (6S)-5-formyl-5,6,7,8-tetrahydrofolate: R23, E80, and K120. The 162-residue stretch at G216 to G377 folds into the TrmE-type G domain. K(+) is bound at residue N226. GTP-binding positions include N226 to S231, T245 to T251, D270 to G273, N335 to D338, and S358 to R360. A Mg(2+)-binding site is contributed by S230. 3 residues coordinate K(+): T245, I247, and T250. Residue T251 coordinates Mg(2+). Residue K454 participates in (6S)-5-formyl-5,6,7,8-tetrahydrofolate binding.

The protein belongs to the TRAFAC class TrmE-Era-EngA-EngB-Septin-like GTPase superfamily. TrmE GTPase family. Homodimer. Heterotetramer of two MnmE and two MnmG subunits. It depends on K(+) as a cofactor.

The protein resides in the cytoplasm. Functionally, exhibits a very high intrinsic GTPase hydrolysis rate. Involved in the addition of a carboxymethylaminomethyl (cmnm) group at the wobble position (U34) of certain tRNAs, forming tRNA-cmnm(5)s(2)U34. In Salmonella choleraesuis (strain SC-B67), this protein is tRNA modification GTPase MnmE.